The chain runs to 185 residues: Imidazoleglycerol-phosphate dehydratase (185 aa).

This sequence belongs to the imidazoleglycerol-phosphate dehydratase family.

Its subcellular location is the cytoplasm. The enzyme catalyses D-erythro-1-(imidazol-4-yl)glycerol 3-phosphate = 3-(imidazol-4-yl)-2-oxopropyl phosphate + H2O. It participates in amino-acid biosynthesis; L-histidine biosynthesis; L-histidine from 5-phospho-alpha-D-ribose 1-diphosphate: step 6/9. This chain is Imidazoleglycerol-phosphate dehydratase, found in Pyrobaculum arsenaticum (strain DSM 13514 / JCM 11321 / PZ6).